Reading from the N-terminus, the 268-residue chain is Tryptophan synthase alpha chain (268 aa).

Residues Glu49 and Asp60 each act as proton acceptor in the active site.

The protein belongs to the TrpA family. As to quaternary structure, tetramer of two alpha and two beta chains.

It carries out the reaction (1S,2R)-1-C-(indol-3-yl)glycerol 3-phosphate + L-serine = D-glyceraldehyde 3-phosphate + L-tryptophan + H2O. The protein operates within amino-acid biosynthesis; L-tryptophan biosynthesis; L-tryptophan from chorismate: step 5/5. Functionally, the alpha subunit is responsible for the aldol cleavage of indoleglycerol phosphate to indole and glyceraldehyde 3-phosphate. This chain is Tryptophan synthase alpha chain, found in Yersinia pestis bv. Antiqua (strain Antiqua).